A 260-amino-acid polypeptide reads, in one-letter code: Cytochrome c oxidase subunit 2 (260 aa).

At 1 to 39 the chain is on the mitochondrial intermembrane side; that stretch reads MKFEWLFLTIAPCDAAEPWQLGFQDAATPMMQGIIDLHH. Residues 40 to 61 traverse the membrane as a helical segment; that stretch reads DIFFFLILILVFVSRILVRALW. Residues 62–76 lie on the Mitochondrial matrix side of the membrane; the sequence is HFHYKKNPIPQRIVH. A helical transmembrane segment spans residues 77 to 104; the sequence is GTTIEILRTIFPSIIPMFIAIPSFALLY. Residues 105–260 lie on the Mitochondrial intermembrane side of the membrane; the sequence is SMDEVVVDPA…QLIPQTTGEA (156 aa). His186, Cys221, Glu223, Cys225, and His229 together coordinate Cu cation. Glu223 serves as a coordination point for Mg(2+).

It belongs to the cytochrome c oxidase subunit 2 family. In terms of assembly, component of the cytochrome c oxidase (complex IV, CIV), a multisubunit enzyme composed of a catalytic core of 3 subunits and several supernumerary subunits. The complex exists as a monomer or a dimer and forms supercomplexes (SCs) in the inner mitochondrial membrane with ubiquinol-cytochrome c oxidoreductase (cytochrome b-c1 complex, complex III, CIII). The cofactor is Cu cation.

The protein resides in the mitochondrion inner membrane. It catalyses the reaction 4 Fe(II)-[cytochrome c] + O2 + 8 H(+)(in) = 4 Fe(III)-[cytochrome c] + 2 H2O + 4 H(+)(out). Its function is as follows. Component of the cytochrome c oxidase, the last enzyme in the mitochondrial electron transport chain which drives oxidative phosphorylation. The respiratory chain contains 3 multisubunit complexes succinate dehydrogenase (complex II, CII), ubiquinol-cytochrome c oxidoreductase (cytochrome b-c1 complex, complex III, CIII) and cytochrome c oxidase (complex IV, CIV), that cooperate to transfer electrons derived from NADH and succinate to molecular oxygen, creating an electrochemical gradient over the inner membrane that drives transmembrane transport and the ATP synthase. Cytochrome c oxidase is the component of the respiratory chain that catalyzes the reduction of oxygen to water. Electrons originating from reduced cytochrome c in the intermembrane space (IMS) are transferred via the dinuclear copper A center (CU(A)) of subunit 2 and heme A of subunit 1 to the active site in subunit 1, a binuclear center (BNC) formed by heme A3 and copper B (CU(B)). The BNC reduces molecular oxygen to 2 water molecules using 4 electrons from cytochrome c in the IMS and 4 protons from the mitochondrial matrix. This Glycine max (Soybean) protein is Cytochrome c oxidase subunit 2 (COX2).